The primary structure comprises 194 residues: Phosphoheptose isomerase (194 aa).

The 158-residue stretch at Ile-37 to Val-194 folds into the SIS domain. Asn-52–Gly-54 lines the substrate pocket. Residues His-61 and Glu-65 each coordinate Zn(2+). Substrate is bound by residues Glu-65, Asn-93–Asp-94, Ser-119–Ser-121, Ser-124, and Gln-172. Positions 172 and 180 each coordinate Zn(2+).

Belongs to the SIS family. GmhA subfamily. In terms of assembly, homotetramer. Requires Zn(2+) as cofactor.

The protein resides in the cytoplasm. The catalysed reaction is 2 D-sedoheptulose 7-phosphate = D-glycero-alpha-D-manno-heptose 7-phosphate + D-glycero-beta-D-manno-heptose 7-phosphate. It participates in carbohydrate biosynthesis; D-glycero-D-manno-heptose 7-phosphate biosynthesis; D-glycero-alpha-D-manno-heptose 7-phosphate and D-glycero-beta-D-manno-heptose 7-phosphate from sedoheptulose 7-phosphate: step 1/1. Catalyzes the isomerization of sedoheptulose 7-phosphate in D-glycero-D-manno-heptose 7-phosphate. The polypeptide is Phosphoheptose isomerase (Actinobacillus succinogenes (strain ATCC 55618 / DSM 22257 / CCUG 43843 / 130Z)).